The primary structure comprises 503 residues: uncharacterized protein (503 aa).

A helical membrane pass occupies residues 26–46; the sequence is ILFLLLGLIILVNISINVATA. 4 disordered regions span residues 155–176, 311–381, 436–456, and 472–503; these read RPLS…MSQM, YDAR…ESHE, QISD…NPGG, and VQEN…GKLN. Composition is skewed to basic and acidic residues over residues 311-322 and 334-346; these read YDARDQWRRGTE and NPRE…DHNS. The span at 348–367 shows a compositional bias: polar residues; that stretch reads AHRQNFSSHTHSQPNHSPPQ. Basic residues predominate over residues 493–503; that stretch reads SLHRSRTGKLN.

The protein localises to the membrane. This is an uncharacterized protein from Mus musculus (Mouse).